We begin with the raw amino-acid sequence, 203 residues long: Urease accessory protein UreG (203 aa).

Residue 11–18 (GPVGSGKT) coordinates GTP.

It belongs to the SIMIBI class G3E GTPase family. UreG subfamily. In terms of assembly, homodimer. UreD, UreF and UreG form a complex that acts as a GTP-hydrolysis-dependent molecular chaperone, activating the urease apoprotein by helping to assemble the nickel containing metallocenter of UreC. The UreE protein probably delivers the nickel.

It localises to the cytoplasm. In terms of biological role, facilitates the functional incorporation of the urease nickel metallocenter. This process requires GTP hydrolysis, probably effectuated by UreG. The sequence is that of Urease accessory protein UreG from Prochlorococcus marinus (strain MIT 9312).